Here is a 416-residue protein sequence, read N- to C-terminus: Antigen EG13 (416 aa).

The F-BAR domain occupies 1 to 247 (MIQERADIEK…TVAKVDADAD (247 aa)). The disordered stretch occupies residues 297–327 (LKTFTSPDRGGPIPGTTDSGSNISTSPVHTT). Over residues 312-327 (TTDSGSNISTSPVHTT) the composition is skewed to polar residues. Residues 361 to 416 (RPGVPIRALYDYVGVEADELSFNSGDLFEKLEDEDEQGWCKGRKDGRVGLYPRQLR) enclose the SH3 domain.

The chain is Antigen EG13 (EG13) from Echinococcus granulosus (Hydatid tapeworm).